The sequence spans 99 residues: Large ribosomal subunit protein uL23 (99 aa).

The protein belongs to the universal ribosomal protein uL23 family. Part of the 50S ribosomal subunit. Contacts protein L29, and trigger factor when it is bound to the ribosome.

Its function is as follows. One of the early assembly proteins it binds 23S rRNA. One of the proteins that surrounds the polypeptide exit tunnel on the outside of the ribosome. Forms the main docking site for trigger factor binding to the ribosome. The chain is Large ribosomal subunit protein uL23 from Lachnoclostridium phytofermentans (strain ATCC 700394 / DSM 18823 / ISDg) (Clostridium phytofermentans).